The primary structure comprises 245 residues: Phosphoribosylaminoimidazole-succinocarboxamide synthase (245 aa).

It belongs to the SAICAR synthetase family.

The catalysed reaction is 5-amino-1-(5-phospho-D-ribosyl)imidazole-4-carboxylate + L-aspartate + ATP = (2S)-2-[5-amino-1-(5-phospho-beta-D-ribosyl)imidazole-4-carboxamido]succinate + ADP + phosphate + 2 H(+). The protein operates within purine metabolism; IMP biosynthesis via de novo pathway; 5-amino-1-(5-phospho-D-ribosyl)imidazole-4-carboxamide from 5-amino-1-(5-phospho-D-ribosyl)imidazole-4-carboxylate: step 1/2. This chain is Phosphoribosylaminoimidazole-succinocarboxamide synthase, found in Nostoc sp. (strain PCC 7120 / SAG 25.82 / UTEX 2576).